We begin with the raw amino-acid sequence, 200 residues long: ATP-dependent Clp protease proteolytic subunit 1 (200 aa).

Catalysis depends on serine 98, which acts as the Nucleophile. Histidine 123 is a catalytic residue.

Belongs to the peptidase S14 family. As to quaternary structure, fourteen ClpP subunits assemble into 2 heptameric rings which stack back to back to give a disk-like structure with a central cavity, resembling the structure of eukaryotic proteasomes.

It localises to the cytoplasm. The catalysed reaction is Hydrolysis of proteins to small peptides in the presence of ATP and magnesium. alpha-casein is the usual test substrate. In the absence of ATP, only oligopeptides shorter than five residues are hydrolyzed (such as succinyl-Leu-Tyr-|-NHMec, and Leu-Tyr-Leu-|-Tyr-Trp, in which cleavage of the -Tyr-|-Leu- and -Tyr-|-Trp bonds also occurs).. Functionally, cleaves peptides in various proteins in a process that requires ATP hydrolysis. Has a chymotrypsin-like activity. Plays a major role in the degradation of misfolded proteins. The polypeptide is ATP-dependent Clp protease proteolytic subunit 1 (Mycobacterium leprae (strain TN)).